The following is a 379-amino-acid chain: Succinyl-diaminopimelate desuccinylase (379 aa).

Histidine 70 provides a ligand contact to Zn(2+). Aspartate 72 is an active-site residue. Aspartate 103 provides a ligand contact to Zn(2+). The active-site Proton acceptor is the glutamate 137. Zn(2+)-binding residues include glutamate 138, glutamate 166, and histidine 352.

Belongs to the peptidase M20A family. DapE subfamily. In terms of assembly, homodimer. Zn(2+) is required as a cofactor. Co(2+) serves as cofactor.

It catalyses the reaction N-succinyl-(2S,6S)-2,6-diaminopimelate + H2O = (2S,6S)-2,6-diaminopimelate + succinate. It functions in the pathway amino-acid biosynthesis; L-lysine biosynthesis via DAP pathway; LL-2,6-diaminopimelate from (S)-tetrahydrodipicolinate (succinylase route): step 3/3. Functionally, catalyzes the hydrolysis of N-succinyl-L,L-diaminopimelic acid (SDAP), forming succinate and LL-2,6-diaminopimelate (DAP), an intermediate involved in the bacterial biosynthesis of lysine and meso-diaminopimelic acid, an essential component of bacterial cell walls. The chain is Succinyl-diaminopimelate desuccinylase from Burkholderia cenocepacia (strain HI2424).